The sequence spans 154 residues: Large ribosomal subunit protein uL13 (154 aa).

It belongs to the universal ribosomal protein uL13 family. Part of the 50S ribosomal subunit.

Its function is as follows. This protein is one of the early assembly proteins of the 50S ribosomal subunit, although it is not seen to bind rRNA by itself. It is important during the early stages of 50S assembly. In Agrobacterium fabrum (strain C58 / ATCC 33970) (Agrobacterium tumefaciens (strain C58)), this protein is Large ribosomal subunit protein uL13.